The primary structure comprises 4151 residues: MVDQLQHATEALRKALVQVERLKRTNRALLERSSEPIAIVGMSCRFPGGVDSPEGLWQMVADARDVMSEFPTDRGWDLAGLFDPDPDVRHKSYARTGGFVDGVADFDPAFFGISPSEALAMDPQHRMLLELSWEALERAGIDPTGLRGSATGVFAGLIVGGYGMLAEEIEGYRLTGMTSSVASGRVAYVLGLEGPAVSVDTACSSSLVALHMAVGSLRSGECDLALAGGVTVNATPTVFVEFSRHRGLAPDGRCKPYAGRADGVGWSEGGGMLVLQRLSDARRLGHPVLAVVVGSAVNQDGASNGLTAPNGPSQQRVVRAALANAGLSAAEVDVVEGHGTGTTLGDPIEAQALLATYGQDRGEPGEPLWLGSVKSNMGHTQAAAGVAGVIKMVLAMRHELLPATLHVDVPSPHVDWSAGAVELLTAPRVWPAGARTRRAGVSSFGISGTNAHVIIEAVPVVPRREAGWAGPVVPWVVSAKSESALRGQAARLAAYVRGDDGLDVADVGWSLAGRSVFEHRAVVVGGDRDRLLAGLDELAGDQLGGSVVRGTATAAGKTVFVFPGQGSQWLGMGIELLDTAPAFAQQIDACAEAFAEFVDWSLVDVLRGAPGAPGLDRVDVVQPVLFAVMVSLAELWKSVAVHPDAVIGHSQGEIAAAYVAGALSLRDAARVVTLRSKLLAGLAGPGGMVSIACGADQARDLLAPFGDRVSIAVVNGPSAVVVSGEVGALEELIAVCSTKELRTRRIEVDYASHSVEVEAIRGPLAEALSGIEPRSTRTVFFSTVTGNRLDTAGLDADYWYRNVRQTVLFDQAVRNACEQGYRTFIESSPHPALITGVEETFAACTDGDSEAIVVPTLGRGDGGLHRFLLSAASAFVAGVAVNWRGTLDGAGYVELPTYAFDKRRFWLSAEGSGADVSGLGLGASEHPLLGAVVDLPASGGVVLTGRLSPNVQPWLADHAVSDVVLFPGTGFVELAIRAGDEVGCSVLDELTLAAPLLLPATGSVAVQVVVDAGRDSNSRGVSIFSRADAQAGWLLHAEGILRPGSVEPGADLSVWPPAGAVTVDVADGYERLATRGYRYGPAFRGLTAMWARGEEIFAEVRLPEAAGGVGGFGVHPALLDAVLHAVVIAGDPDELALPFAWQGVSLHATGASAVRARIAPAGPSAVSVELADGLGLPVLSVASMVARPVTERQLLAAVSGSGPDRLFEVIWSPASAATSPGPTPAYQIFESVAADQDPVAGSYVRSHQALAAVQSWLTDHESGVLVVATRGAMALPREDVADLAGAAVWGLVRSAQTEHPGRIVLVDSDAATDDAAIAMALATGEPQVVLRGGQVYTARVRGSRAADAILVPPGDGPWRLGLGSAGTFENLRLEPVPNADAPLGPGQVRVAMRAIAANFRDIMITLGMFTHDALLGGEGAGVVVEVGPGVTEFSVGDSVFGFFPDGSGTLVAGDVRLLLPMPADWSYAEAAAISAVFTTAYYAFIHLADVQPGQRVLIHAGTGGVGMAAVQLARHLGLEVFATASKGKWDTLRAMGFDDDHISDSRSLEFEDKFRAATGGRGFDVVLDSLAGEFVDASLRLVAPGGVFLEMGKTDIRDPGVIAQQYPGVRYRAFDLFEPGRPRMHQYMLELATLFGDGVLRPLPVTTFDVRRAPAALRYLSQARHTGKVVMLMPGSWAAGTVLITGGTGMAGSAVARHVVARHGVRNLVLVSRRGPDAPGAAELVAELAAAGAQVQVVACDAADRAALAKVIADIPVQHPLSGVIHTAGALDDAVVMSLTPDRVDVVLRSKVDAAWHLHELTRDLDVSAFVMFSSMAGLVGSSGQANYAAANSFLDALAAHRRAHGLPAISLGWGLWDQASAMTGGLDAADLARLGREGVLALSTAEALELFDTAMIVDEPFLAPARIDLTALRAHAVAVPPMFSDLASAPTRRQVDDSVAAAKSKSALAHRLHGLPEAEQHAVLLGLVRLHIATVLGNITPEAIDPDKAFQDLGFDSLTAVEMRNRLKSATGLSLSPTLIFDYPTPNRLASYIRTELAGLPQEIKHTPAVRTTSEDPIAIVGMACRYPGGVNSPDDMWDMLIQGRDVLSEFPADRGWDLAGLYNPDPDAAGACYTRTGGFVDGVGDFDPAFFGVGPSEALAMDPQHRMLLELSWEALERAGIDPTGLRGSATGVFAGVMTQGYGMFAAEPVEGFRLTGQLSSVASGRVAYVLGLEGPAVSVDTACSSSLVALHMAVGSLRSGECDLALAGGVTVNATPDIFVEFSRWRGLSPDGRCKAFAAAADGTGFSEGGGMLVLQRLSDARRLGHPVLAVVVGSAVNQDGASNGLTAPNGPSQQRVVRAALANAGLSAAEVDVVEGHGTGTTLGDPIEAQALLATYGQDRGEPGEPLWLGSVKSNMGHTQAAAGVAGVIKMVLAMRHELLPATLHVDVPSPHVDWSAGAVELLTAPRVWPAGARTRRAGVSSFGISGTNAHVIIEAVPVVPRREAGWAGPVVPWVVSAKSESALRGQAARLAAYVRGDDGLDVADVGWSLAGRSVFEHRAVVVGGDRDRLLAGLDELAGDQLGGSVVRGTATAAGKTVFVFPGQGSQWLGMGMGLHAGYPVFAEAFNTVVGELDRHLLRPLREVMWGHDENLLNSTEFAQPALFAVEVALFRLLGSWGVRPDFVMGHSIGELSAAHVAGVLSLENAAVLVAARGRLMQALPAGGAMVAVQAAEEEVRPLLSAEVDIAAVNGPASLVISGAQNAVAAVADQLRADGRRVHQLAVSHAFHSPLMDPMIDEFAAVAAGIAIGRPTIGVISNVTGQLAGDDFGSAAYWRRHIRQAVRFADSVRFAQAAGGSRFLEVGPSGGLVASIEESLPDVAVTTMSALRKDRPEPATLTNAVAQGFVTGMDLDWRAVVGEAQFVELPTYAFQRRRFWLSGDGVAADAAGLGLAASEHALLGAVIDLPASGGVVLTGRLSPSVQGWLADHSVAGVTIFPGAGFVELAIRAGDEVGCGVVDELTLAAPLVLPASGSVAVQVVVNGPDESGVRGVSVYSRGDVGTGWVLHAEGALRAGSAEPTADLAMWPPAGAVPVEVADGYQQLAERGYGYGPAFRGLTAMWRRGDEVFAEVALPADAGVSVTGFGVHPVLLDAALHAVVLSAESAERGQGSVLVPFSWQGVSLHAAGASAVRARIAPVGPSAVSIELADGLGLPVLSVASMLARPVTDQQLRAAVSSSGPDRLFEVTWSPQPSAAVEPLPVCAWGTTEDSAAVVFESVPLAGDVVAGVYAATSSVLDVLQSWLTRDGAGVLVVMTRGAVALPGEDVTDLAGAAVWGLVRSAQTEHPGRIVLVDSDAPLDDSALAAVVTTGEPQVLWRRGEVYTARVHGSRAVGGLLVPPSDRPWRLAMSTAGTFENLRLELIPDADAPLGPGQVRVAVSAIAANFRDVMIALGLYPDPDAVMGVEACGVVIETSLNKGSFAVGDRVMGLFPEGTGTVASTDQRLLVKVPAGWSHTAAATTSVVFATAHYALVDLAAARSGQRVLIHAGTGGVGMAAVQLARHLGLEVFATASKGKWDTLRAMGFDDDHISDSRSLEFEDKFRAATGGRGFDVVLDSLAGEFVDASLRLVAPGGVFLEMGKTDIRDPGVIAQQYPGVRYRAFDLFEPGPDRIAQILAELATLFGDGVLRPLPVTTFDVRCAPAALRYLSQARHTGKVVMLMPGSWAAGTVLITGGTGMAGSAVARHVVARHGVRNLVLVSRRGPDAPGAAELVAELAAAGAQVQVVACDAADRAALAKVIADIPVQHPLSGVIHTAGALDDAVVMSLTPDRVDVVLRSKVDAAWHLHELTRDLDVSAFVMFSSMAGLVGSSGQANYAAANSFLDALAAHRRAHGLPAISLGWGLWDQASAMTGGLATVDFKRFARDGIVAMSSADALQLFDTAMIVDEPFMLPAHIDFAALKVKFDGGTLPPMFVDLINAPTRRQVDDSLAAAKSKSALLQRLEGLPEDEQHAVLLDLVRSHIATVLGSASPEAIDPDRAFQELGFDSLTAVEMRNRLKSATGLALSPTLIFDYPNSAALAGYMRRELLGSSPQDTSAVAAGEAELQRIVASIPVKRLRQAGVLDLLLALANETETSGQDPALAPTAEQEIADMDLDDLVNAAFRNDDE.

A coiled-coil region spans residues 2–32 (VDQLQHATEALRKALVQVERLKRTNRALLER). The Ketosynthase family 3 (KS3) 1 domain maps to 34 to 457 (SEPIAIVGMS…GTNAHVIIEA (424 aa)). Module regions lie at residues 35 to 2038 (EPIA…RTEL) and 2057 to 4070 (DPIA…RREL). Catalysis depends on cysteine 203, which acts as the Acyl-thioester intermediate; for beta-ketoacyl synthase 1 activity. Catalysis depends on for beta-ketoacyl synthase 1 activity residues histidine 338 and histidine 379. The interval 559–880 (VFVFPGQGSQ…AASAFVAGVA (322 aa)) is acyltransferase 1. Serine 650 serves as the catalytic Acyl-ester intermediate; for acyltransferase 1 activity. An N-terminal hotdog fold 1 region spans residues 926 to 1048 (HPLLGAVVDL…GILRPGSVEP (123 aa)). Residues 926 to 1194 (HPLLGAVVDL…VARPVTERQL (269 aa)) are dehydratase 1. Residues 926-1195 (HPLLGAVVDL…ARPVTERQLL (270 aa)) form the PKS/mFAS DH 1 domain. The Proton acceptor; for dehydratase activity 1 role is filled by histidine 958. A C-terminal hotdog fold 1 region spans residues 1060–1195 (AVTVDVADGY…ARPVTERQLL (136 aa)). Aspartate 1120 (proton donor; for dehydratase activity 1) is an active-site residue. Residues 1366 to 1671 (GTFENLRLEP…QARHTGKVVM (306 aa)) form an enoyl reductase 1 region. Positions 1680 to 1858 (GTVLITGGTG…AISLGWGLWD (179 aa)) are beta-ketoacyl reductase 1. The For beta-ketoacyl reductase 1 activity role is filled by tyrosine 1828. Residues 1963 to 2038 (AVLLGLVRLH…RLASYIRTEL (76 aa)) enclose the Carrier 1 domain. O-(pantetheine 4'-phosphoryl)serine is present on serine 1998. The 425-residue stretch at 2056 to 2480 (EDPIAIVGMA…GTNAHVIIEA (425 aa)) folds into the Ketosynthase family 3 (KS3) 2 domain. The active-site Acyl-thioester intermediate; for beta-ketoacyl synthase 2 activity is the cysteine 2226. Residues histidine 2361 and histidine 2402 each act as for beta-ketoacyl synthase 2 activity in the active site. Residues 2582 to 2893 (VFVFPGQGSQ…AVAQGFVTGM (312 aa)) form an acyltransferase 2 region. Serine 2672 (acyl-ester intermediate; for acyltransferase 2 activity) is an active-site residue. Residues 2940–3062 (HALLGAVIDL…GALRAGSAEP (123 aa)) are N-terminal hotdog fold 2. Positions 2940–3215 (HALLGAVIDL…ARPVTDQQLR (276 aa)) are dehydratase 2. A PKS/mFAS DH 2 domain is found at 2940–3215 (HALLGAVIDL…ARPVTDQQLR (276 aa)). Catalysis depends on histidine 2972, which acts as the Proton acceptor; for dehydratase activity 2. The C-terminal hotdog fold 2 stretch occupies residues 3074–3215 (AVPVEVADGY…ARPVTDQQLR (142 aa)). Catalysis depends on aspartate 3135, which acts as the Proton donor; for dehydratase activity 2. The tract at residues 3395–3701 (GTFENLRLEL…QARHTGKVVM (307 aa)) is enoyl reductase 2. A beta-ketoacyl reductase 2 region spans residues 3710–3888 (GTVLITGGTG…AISLGWGLWD (179 aa)). Tyrosine 3858 functions as the For beta-ketoacyl reductase 2 activity in the catalytic mechanism. A Carrier 2 domain is found at 3995 to 4070 (AVLLDLVRSH…ALAGYMRREL (76 aa)). Serine 4030 is subject to O-(pantetheine 4'-phosphoryl)serine.

As to quaternary structure, forms a large supramolecular assembly mediated through specific interactions between the N- and C-terminus linkers.

It catalyses the reaction a medium-chain fatty acyl-CoA + 5 (S)-methylmalonyl-CoA + 5 malonyl-CoA + 22 NADPH + 32 H(+) = a mycoketide-CoA + 10 CO2 + 22 NADP(+) + 10 CoA + 11 H2O. The protein operates within lipid metabolism; fatty acid metabolism. Involved in the synthesis of beta-D-mannosyl phosphomycoketide (MPM), an antigenic mycobacterial polyketide. Binds a fatty acyl-CoA as a starter unit, and extends it by five rounds of alternative additions of malonyl-CoA and methylmalonyl-CoA extender units. Depending on the starter unit, the enzyme forms mycoketide-CoAs of different lengths. Shows preference for small-/medium-chain starter fatty acyl substrates. Uses a hybrid modularly iterative mechanism, by forming a supramolecular assembly to perform repetitive cycles of iterations. The protein is Mycoketide-CoA synthase of Mycobacterium tuberculosis (strain ATCC 25618 / H37Rv).